The following is a 551-amino-acid chain: Delta-selinene synthase TPS7FN (551 aa).

(2E,6E)-farnesyl diphosphate contacts are provided by R266, D303, D307, R444, and D447. Mg(2+) is bound by residues D303 and D307. The short motif at 303–307 (DDIYD) is the DDXXD motif element. 3 residues coordinate Mg(2+): D447, S451, and E455.

The protein belongs to the terpene synthase family. Tpsb subfamily. The cofactor is Mg(2+). Requires Mn(2+) as cofactor.

The catalysed reaction is (2E,6E)-farnesyl diphosphate = delta-selinene + diphosphate. The enzyme catalyses (2E)-geranyl diphosphate = beta-myrcene + diphosphate. It catalyses the reaction (2E)-geranyl diphosphate = (4S)-limonene + diphosphate. It carries out the reaction (2E,6E)-farnesyl diphosphate + H2O = selina-6-en-4-ol + diphosphate. The protein operates within secondary metabolite biosynthesis; terpenoid biosynthesis. Involved in sesquiterpene olefins biosynthesis, constituants of cannabinoids and terpenoids-rich resins. Catalyzes mainly the conversion of (2E)-farnesyl diphosphate to delta-selinene, and also produces minor products such as selina-6-en-4-ol. Can also use (2E)-geranyl diphosphate as substrate with low efficiency, producing minor amounts of myrcene and limonene. The protein is Delta-selinene synthase TPS7FN of Cannabis sativa (Hemp).